The primary structure comprises 199 residues: MARTWLLLLLGVRCQALPSGIAGTPFPSLAPPITLLVDGRQHMLVVCLVLDAAPPGLDNPVWFSAGNGSALDAFTYGPSLAPDGTWTSLAQLSLPSEELEAWEPLVCHTRPGAGGQNRSTHPLQLSGESSTARSCFPEPLGGTQRQVLWLSLLRLLLFKLLLLDVLLTCSHLRLHVLAGQHLQPPPSRKSLPPTHRIWT.

The signal sequence occupies residues 1–16 (MARTWLLLLLGVRCQA). Over 17–146 (LPSGIAGTPF…PEPLGGTQRQ (130 aa)) the chain is Extracellular. A disulfide bond links Cys-47 and Cys-107. Residues Asn-67 and Asn-117 are each glycosylated (N-linked (GlcNAc...) asparagine). The chain crosses the membrane as a helical span at residues 147–167 (VLWLSLLRLLLFKLLLLDVLL). Over 168 to 199 (TCSHLRLHVLAGQHLQPPPSRKSLPPTHRIWT) the chain is Cytoplasmic.

As to quaternary structure, heterodimer with TCRB; disulfide linked. This heterodimer assembles with CD3 proteins into a signaling-competent pre-T-cell receptor complex. Interacts with RHBDD1. As to expression, isoform 1 is expressed at higher levels than isoform 2 in the thymus while only isoform 2 is expressed in polyclonal beta-only cells. Isoform 1 shows a predominant expression in immature thymocytes.

The protein localises to the membrane. The protein resides in the cell membrane. In terms of biological role, component of the pre-T-cell receptor complex (composed of PTCRA, TCRB and the CD3 complex) that plays a crucial role in early T-cell development, particularly alpha-beta T cell differentiation. Isoform 1 acts to retain most TCRB intracellularly, while isoform 2 permits higher levels of cell surface TCRB expression and facilitates signaling from the CD3-TCRB complex. This Mus musculus (Mouse) protein is Pre T-cell antigen receptor alpha.